A 142-amino-acid polypeptide reads, in one-letter code: 3-hydroxyacyl-[acyl-carrier-protein] dehydratase FabZ (142 aa).

Residue H47 is part of the active site.

It belongs to the thioester dehydratase family. FabZ subfamily.

It localises to the cytoplasm. It catalyses the reaction a (3R)-hydroxyacyl-[ACP] = a (2E)-enoyl-[ACP] + H2O. Its function is as follows. Involved in unsaturated fatty acids biosynthesis. Catalyzes the dehydration of short chain beta-hydroxyacyl-ACPs and long chain saturated and unsaturated beta-hydroxyacyl-ACPs. The protein is 3-hydroxyacyl-[acyl-carrier-protein] dehydratase FabZ of Thermoanaerobacter sp. (strain X514).